Consider the following 545-residue polypeptide: CTP synthase (545 aa).

Residues 1 to 266 (MTTRYIFVTG…DDLVVKRFGL (266 aa)) form an amidoligase domain region. Serine 14 contacts CTP. UTP is bound at residue serine 14. ATP contacts are provided by residues 15-20 (SLGKGI) and aspartate 72. Aspartate 72 and glutamate 140 together coordinate Mg(2+). CTP-binding positions include 147–149 (DIE), 187–192 (KTKPTQ), and lysine 223. UTP contacts are provided by residues 187–192 (KTKPTQ) and lysine 223. 239 to 241 (KDV) lines the ATP pocket. The 252-residue stretch at 291 to 542 (VIGMVGKYIE…IAAASAHQKR (252 aa)) folds into the Glutamine amidotransferase type-1 domain. L-glutamine is bound at residue glycine 352. Residue cysteine 379 is the Nucleophile; for glutamine hydrolysis of the active site. L-glutamine-binding positions include 380-383 (LGMQ), glutamate 403, and arginine 470. Active-site residues include histidine 515 and glutamate 517.

It belongs to the CTP synthase family. Homotetramer.

It carries out the reaction UTP + L-glutamine + ATP + H2O = CTP + L-glutamate + ADP + phosphate + 2 H(+). It catalyses the reaction L-glutamine + H2O = L-glutamate + NH4(+). The catalysed reaction is UTP + NH4(+) + ATP = CTP + ADP + phosphate + 2 H(+). It functions in the pathway pyrimidine metabolism; CTP biosynthesis via de novo pathway; CTP from UDP: step 2/2. Its activity is regulated as follows. Allosterically activated by GTP, when glutamine is the substrate; GTP has no effect on the reaction when ammonia is the substrate. The allosteric effector GTP functions by stabilizing the protein conformation that binds the tetrahedral intermediate(s) formed during glutamine hydrolysis. Inhibited by the product CTP, via allosteric rather than competitive inhibition. Functionally, catalyzes the ATP-dependent amination of UTP to CTP with either L-glutamine or ammonia as the source of nitrogen. Regulates intracellular CTP levels through interactions with the four ribonucleotide triphosphates. The polypeptide is CTP synthase (Shewanella baltica (strain OS155 / ATCC BAA-1091)).